The primary structure comprises 863 residues: Axin-1 (863 aa).

The tract at residues 1–81 (MNVQEQGFPL…PEGSASPTPP (81 aa)) is disordered. The short motif at 20–29 (APRPPVPGEE) is the Tankyrase-binding motif element. A compositionally biased stretch (polar residues) spans 34–61 (STDSRPVNHSFCSGKGTSIKSETSTATP). A Phosphoserine modification is found at S75. At S77 the chain carries Phosphoserine; by CK1. The RGS domain maps to 88 to 211 (SLHSLLDDQD…LKSDIYLEYT (124 aa)). Residues 209–338 (EYTRTGSESP…DADTLSLTDS (130 aa)) form an interaction with TP53 region. Disordered stretches follow at residues 215 to 240 (SESP…YLPT), 249 to 268 (CDQD…SRLT), and 315 to 344 (ATSA…DGIP). S217 carries the phosphoserine modification. Over residues 249 to 258 (CDQDADEDDG) the composition is skewed to acidic residues. Residues 325-339 (SLSSDADTLSLTDSS) show a composition bias toward low complexity. Residues 348–432 (IRKQHRREMQ…EDGEMPSGPM (85 aa)) are interaction with GSK3B. The segment at 353–411 (RREMQESIQVNGRVPLPHIPRTYRMPKEIRVEPQKFAEELIHRLEAVQRTREAEEKLEE) is interaction with SIAH1. The segment at 433–501 (ASHKLPSVPA…SPDSGHVAKT (69 aa)) is interaction with beta-catenin. At S468 the chain carries Phosphoserine; by CK1. At T480 the chain carries Phosphothreonine; by GSK3-beta. S485 carries the post-translational modification Phosphoserine; by GSK3-beta. A phosphoserine mark is found at S492 and S509. The interaction with RNF111 stretch occupies residues 505-758 (GGTASGHGKH…PVLSVVPAVS (254 aa)). The segment covering 529–542 (HHRHVHHHVHHNSA) has biased composition (basic residues). Disordered regions lie at residues 529 to 624 (HHRH…DAEK) and 642 to 664 (HRKA…SRPL). The span at 543–554 (RPKEQMEAEVAR) shows a compositional bias: basic and acidic residues. Residues 572 to 790 (PRSYSENAGT…CDSIVVAYYF (219 aa)) form an interaction with PPP2CA region. A compositionally biased stretch (polar residues) spans 575–584 (YSENAGTTLS). The tract at residues 678–753 (AQLRNSVQPS…RPACAPVLSV (76 aa)) is interaction with HIPK2. Residues 781–863 (CDSIVVAYYF…KIIGKVEKVD (83 aa)) form the DIX domain. Glycyl lysine isopeptide (Lys-Gly) (interchain with G-Cter in SUMO) cross-links involve residues K858 and K861.

In terms of assembly, homodimer. Component of the beta-catenin destruction complex, containing at least CTNNB1, an axin and GSK3B, that regulates CTNNB1 protein levels through phosphorylation and ubiquitination. Interacts with GSK3B; the interaction hyperphosphorylates CTNNB1 leading to its ubiquitination and destruction. Interacts with DAXX; the interaction stimulates the interaction of DAXX with TP53, stimulates 'Ser-46' phosphorylation of TP53 and induces cell death on UV irradiation. Also interacts with APC, RNF111, SMAD6 and SMAD7. Interacts (via the C-terminal) with PPP1CA; the interaction dephosphorylates AXIN1 and regulates interaction with GSK3B. Interacts with PPP2CA; the interaction dephosphorylates AXIN1. Interacts with MDFI; the interaction decreases AXIN1-mediated JUN N-terminal kinase (JNK) activation. Interacts with MDFIC; the interaction inhibits beta-cateninin-mediated signaling and AXIN1-mediated JUN N-terminal kinase (JNK) activation. Binds ANKRD6, PIAS1, PIAS2, PIAS4, SUMO1, MAP3K1 and MAP3K4. Component of the AXIN1-HIPK2-TP53 complex. Interacts directly in the complex with TP53 and HIPK2. Interacts with DIXDC1; the interaction prevents interaction with MAP3K1. Interacts with AIDA; the interaction blocks the AXIN1-mediated JNK activation through disrupting AXIN1 homodimerization and Wnt signaling. Interacts with LRP5 (via its phosphorylated PPPSP motifs); the interaction is stimulated by WNT1 and GSK3B and activates beta-catenin signaling. Interacts with CTNNB1 (via the armadillo repeats 2-7). Interacts with MACF1. Found in a complex composed of MACF1, APC, AXIN1, CTNNB1 and GSK3B. Interacts with TNKS. Interacts with DAB2; the interaction is mutually exclusive with the AXIN1:PPP1CA interaction. Interacts with ZBED3 (via PPPSP motif); the interaction is direct, enhanced by protein kinase GSK3B and casein kinase CSNK1E activities and decreases GSK3B-induced beta-catenin serine and threonine phosphorylations. Interacts with WDR26. Interacts with GID8. Interacts with SIAH1 and SIAH2; both probably catalyze AXIN1 ubiquitination and subsequent proteasome-mediated ubiquitin-dependent degradation. Interaction with GSK3B and AXIN1 is competitive. In terms of processing, phosphorylation and dephosphorylation of AXIN1 regulates assembly and function of the beta-catenin complex. Phosphorylated by CK1 and GSK3B. Dephosphorylated by PPP1CA and PPP2CA. Phosphorylation by CK1 enhances binding of GSK3B to AXIN1. Also phosphorylated by CDK2 which regulates interaction with CTNBB1. Post-translationally, ADP-ribosylated by tankyrase TNKS and TNKS2. Poly-ADP-ribosylated protein is recognized by RNF146, followed by ubiquitination and subsequent activation of the Wnt signaling pathway. Ubiquitinated by RNF146 when poly-ADP-ribosylated, leading to its degradation and subsequent activation of the Wnt signaling pathway. Deubiquitinated by USP34, deubiquitinated downstream of beta-catenin stabilization step: deubiquitination is important for nuclear accumulation during Wnt signaling to positively regulate beta-catenin (CTNBB1)-mediated transcription. Sumoylation at Lys-858 and Lys-861 prevents ubiquitination and degradation. Sumoylation is required for AXIN1-mediated JNK activation. Ubiquitination by SIAH1 and SIAH2 induces its proteasomal degradation as part of the activation of the Wnt signaling pathway. As to expression, expressed in embryonic stem cells.

It localises to the cytoplasm. The protein resides in the nucleus. Its subcellular location is the cell membrane. It is found in the membrane. Component of the beta-catenin destruction complex required for regulating CTNNB1 levels through phosphorylation and ubiquitination, and modulating Wnt-signaling. Controls dorsoventral patterning via two opposing effects; down-regulates CTNNB1 to inhibit the Wnt signaling pathway and ventralize embryos, but also dorsalizes embryos by activating a Wnt-independent JNK signaling pathway. In Wnt signaling, probably facilitates the phosphorylation of CTNNB1 and APC by GSK3B. Likely to function as a tumor suppressor. Facilitates the phosphorylation of TP53 by HIPK2 upon ultraviolet irradiation. Enhances TGF-beta signaling by recruiting the RNF111 E3 ubiquitin ligase and promoting the degradation of inhibitory SMAD7. Also a component of the AXIN1-HIPK2-TP53 complex which controls cell growth, apoptosis and development. This Mus musculus (Mouse) protein is Axin-1 (Axin1).